Here is a 75-residue protein sequence, read N- to C-terminus: Acyl carrier protein (75 aa).

The Carrier domain maps to 1–74 (MLDKVKEIIV…DVINYIEANK (74 aa)). Serine 34 is modified (O-(pantetheine 4'-phosphoryl)serine).

Belongs to the acyl carrier protein (ACP) family. Post-translationally, 4'-phosphopantetheine is transferred from CoA to a specific serine of apo-ACP by AcpS. This modification is essential for activity because fatty acids are bound in thioester linkage to the sulfhydryl of the prosthetic group.

The protein localises to the cytoplasm. It participates in lipid metabolism; fatty acid biosynthesis. Its function is as follows. Carrier of the growing fatty acid chain in fatty acid biosynthesis. The chain is Acyl carrier protein from Fusobacterium nucleatum subsp. nucleatum (strain ATCC 25586 / DSM 15643 / BCRC 10681 / CIP 101130 / JCM 8532 / KCTC 2640 / LMG 13131 / VPI 4355).